A 491-amino-acid polypeptide reads, in one-letter code: Serine/threonine-protein kinase 3/4 (491 aa).

Residues 1-24 form a disordered region; sequence MEEVQRRQHPHPRRSLKKLSEDSL. Basic residues predominate over residues 7-17; that stretch reads RQHPHPRRSLK. In terms of domain architecture, Protein kinase spans 32-283; the sequence is FDVLEKLGEG…ATQLLQHPFI (252 aa). ATP-binding positions include 38-46 and Lys-61; that span reads LGEGSYGSV. Asp-151 acts as the Proton acceptor in catalysis. Phosphothreonine; by autocatalysis is present on Thr-185. A coiled-coil region spans residues 292–334; the sequence is LRDLITDMMEIKLKRQEEQQRDLDQDDEENSEEDDMDSGTMVR. 2 disordered regions span residues 307-394 and 406-435; these read QEEQ…IQQS and EKEN…PQDG. Over residues 315–328 the composition is skewed to acidic residues; the sequence is DQDDEENSEEDDMD. 2 stretches are compositionally biased toward polar residues: residues 363-373 and 410-428; these read TLDSQMGTMVI and QANS…SSDN. One can recognise an SARAH domain in the interval 437-484; the sequence is FESLKSWSVEELQRRLASLDPTMEQEIEEIRQRYQAKRQPILDAIDAK. Residues 442–475 adopt a coiled-coil conformation; it reads SWSVEELQRRLASLDPTMEQEIEEIRQRYQAKRQ.

Belongs to the protein kinase superfamily. STE Ser/Thr protein kinase family. STE20 subfamily. As to quaternary structure, homodimer; mediated via the coiled-coil region. It depends on Mg(2+) as a cofactor. Post-translationally, proteolytically cleaved by caspase-3 during apoptosis at Asp-328 resulting in a 37 kDa form. Proteolytic cleavage results in kinase activation and nuclear translocation of the truncated form (MST1/N).

It is found in the cytoplasm. It localises to the nucleus. It catalyses the reaction L-seryl-[protein] + ATP = O-phospho-L-seryl-[protein] + ADP + H(+). The catalysed reaction is L-threonyl-[protein] + ATP = O-phospho-L-threonyl-[protein] + ADP + H(+). With respect to regulation, inhibited by the C-terminal non-catalytic region. Activated by caspase-cleavage. Full activation also requires homodimerization and autophosphorylation of Thr-185. In terms of biological role, stress-activated, pro-apoptotic kinase which, following caspase-cleavage, enters the nucleus and induces chromatin condensation followed by internucleosomal DNA fragmentation. Key component of the Hippo signaling pathway which plays a pivotal role in organ size control and tumor suppression by restricting proliferation and promoting apoptosis. The core of this pathway is composed of a kinase cascade wherein stk3/mst2 and stk4/mst1, in complex with its regulatory protein sav1, phosphorylates and activates lats1/2 in complex with its regulatory protein mob1, which in turn phosphorylates and inactivates yap1 oncoprotein and wwtr1/taz. Phosphorylation of yap1 by lats2 inhibits its translocation into the nucleus to regulate cellular genes important for cell proliferation, cell death, and cell migration. Phosphorylates 'Ser-14' of histone H2B (H2BS14ph) during apoptosis. In Squalus acanthias (Spiny dogfish), this protein is Serine/threonine-protein kinase 3/4 (STK4).